The sequence spans 161 residues: UPF0178 protein BSUIS_A1819 (161 aa).

It belongs to the UPF0178 family.

This chain is UPF0178 protein BSUIS_A1819, found in Brucella suis (strain ATCC 23445 / NCTC 10510).